A 270-amino-acid polypeptide reads, in one-letter code: Formamidopyrimidine-DNA glycosylase (270 aa).

The Schiff-base intermediate with DNA role is filled by Pro2. The active-site Proton donor is the Glu3. The Proton donor; for beta-elimination activity role is filled by Lys58. DNA is bound by residues His91, Arg110, and Lys151. The FPG-type zinc-finger motif lies at 236–270; that stretch reads FVYGRGGQPCKVCGTTLREIKLGQRASVYCPKCQR. The active-site Proton donor; for delta-elimination activity is the Arg260.

The protein belongs to the FPG family. In terms of assembly, monomer. The cofactor is Zn(2+).

It catalyses the reaction Hydrolysis of DNA containing ring-opened 7-methylguanine residues, releasing 2,6-diamino-4-hydroxy-5-(N-methyl)formamidopyrimidine.. The enzyme catalyses 2'-deoxyribonucleotide-(2'-deoxyribose 5'-phosphate)-2'-deoxyribonucleotide-DNA = a 3'-end 2'-deoxyribonucleotide-(2,3-dehydro-2,3-deoxyribose 5'-phosphate)-DNA + a 5'-end 5'-phospho-2'-deoxyribonucleoside-DNA + H(+). Its function is as follows. Involved in base excision repair of DNA damaged by oxidation or by mutagenic agents. Acts as a DNA glycosylase that recognizes and removes damaged bases. Has a preference for oxidized purines, such as 7,8-dihydro-8-oxoguanine (8-oxoG). Has AP (apurinic/apyrimidinic) lyase activity and introduces nicks in the DNA strand. Cleaves the DNA backbone by beta-delta elimination to generate a single-strand break at the site of the removed base with both 3'- and 5'-phosphates. In Pseudomonas savastanoi pv. phaseolicola (strain 1448A / Race 6) (Pseudomonas syringae pv. phaseolicola (strain 1448A / Race 6)), this protein is Formamidopyrimidine-DNA glycosylase.